A 321-amino-acid chain; its full sequence is Polyprenyl transferase cle5 (321 aa).

The next 9 membrane-spanning stretches (helical) occupy residues 26-46 (PLLATFSGVWATILAGSHKIT), 57-77 (VLSQALLCFICSFVFCGAGMV), 107-127 (EALVWMAFQFISSWVLVSWML), 132-149 (VQAAMLPVTLSTILYPFA), 159-179 (IYPQYLLGFTLAYPSLIGTLA), 189-209 (LWASINQSLPMFVTVFTWTLY), 232-252 (VLAGSYIHHLLVVLAVLVLGA), 262-282 (SQWLWGGWMGVWTWSFLGQLV), and 300-320 (FALGVWTVFVCVVELLIGGNG).

The protein belongs to the UbiA prenyltransferase family. Mg(2+) is required as a cofactor.

The protein resides in the membrane. Its pathway is secondary metabolite biosynthesis; terpenoid biosynthesis. Polyprenyl transferase; part of the cluster A that mediates the biosynthesis of chevalone E and its oxidized derivatives that possess a unique five-membered lactone ring and can synergistically enhance the cytotoxicity of doxorubicin (DOX) in breast cancer cells. Within the pathway, cle5 takes part to the biosynthesis of the molecular scaffold by catalyzing the C-3 geranylgeranylation reaction of triacetic acid lactone (TAL) produced by cle1. The molecular scaffold is commonly biosynthesized by a series of enzymes including the non-reducing polyketide synthase (NR-PKS) cle1 that produces the alpha-pyrone triacetic acid lactone (TAL); The membrane-bound prenyltransferase cle5 that accepts TAL as its substrate to perform a C-3 geranylgeranylation reaction, in which the pathway-dedicated GGPS cle6 is required to provide GGPP, the other substrate of cle5; the FAD-dependent monooxygenase Cle3 that forms an (S)-epoxide ring at the terminal olefin of the geranylgeranyl group; and the terpene cyclase Cle7 that catalyzes the cyclization of the prenyl group that yields the pentacyclic pathway intermediate chevalone E. Chevalone E can derivatize into seven new oxidized analogs by the cytochrome P450 monooxygenases cle2 (acting at C-20) and cle4 (acting at C-11 and C-12). The chain is Polyprenyl transferase cle5 from Aspergillus versicolor.